The following is a 486-amino-acid chain: L-arabinose isomerase (486 aa).

Residues Glu-299, Glu-324, His-341, and His-440 each contribute to the Mn(2+) site.

This sequence belongs to the arabinose isomerase family. Requires Mn(2+) as cofactor.

The catalysed reaction is beta-L-arabinopyranose = L-ribulose. The protein operates within carbohydrate degradation; L-arabinose degradation via L-ribulose; D-xylulose 5-phosphate from L-arabinose (bacterial route): step 1/3. Catalyzes the conversion of L-arabinose to L-ribulose. In Shouchella clausii (strain KSM-K16) (Alkalihalobacillus clausii), this protein is L-arabinose isomerase.